Consider the following 269-residue polypeptide: MNNLVRSNFQDHPFHLVSPSLWPLYTSISLLVLTSNAALAMHNFANGHYSVYLGLILVISSMSFWFRDVITEGSFLGDHTLAVQKGLNLGVILFIVSEALFFMAIFWAFFHSALTPTVELGGQWPPIGIEPINPFELPLLNTVILLSSGATVTYAHHSIIGRNREGALYGSVATVLLAIVFTGFQGVEYSVSSFTISDGAFGTCFYFGTGFHGLHVIIGTIFLLVALWRIFAYHLTDNHHLGFEAGILYWHFVDVVWLFLYISIYYWGS.

The next 7 membrane-spanning stretches (helical) occupy residues 13 to 33, 46 to 66, 90 to 110, 138 to 160, 167 to 187, 207 to 227, and 245 to 265; these read PFHL…LLVL, NGHY…SFWF, GVIL…WAFF, PLLN…HSII, ALYG…FQGV, FGTG…LVAL, and AGIL…ISIY.

Belongs to the cytochrome c oxidase subunit 3 family. In terms of assembly, component of the cytochrome c oxidase (complex IV, CIV), a multisubunit enzyme composed of a catalytic core of 3 subunits and several supernumerary subunits. The complex exists as a monomer or a dimer and forms supercomplexes (SCs) in the inner mitochondrial membrane with ubiquinol-cytochrome c oxidoreductase (cytochrome b-c1 complex, complex III, CIII).

The protein localises to the mitochondrion inner membrane. It carries out the reaction 4 Fe(II)-[cytochrome c] + O2 + 8 H(+)(in) = 4 Fe(III)-[cytochrome c] + 2 H2O + 4 H(+)(out). Functionally, component of the cytochrome c oxidase, the last enzyme in the mitochondrial electron transport chain which drives oxidative phosphorylation. The respiratory chain contains 3 multisubunit complexes succinate dehydrogenase (complex II, CII), ubiquinol-cytochrome c oxidoreductase (cytochrome b-c1 complex, complex III, CIII) and cytochrome c oxidase (complex IV, CIV), that cooperate to transfer electrons derived from NADH and succinate to molecular oxygen, creating an electrochemical gradient over the inner membrane that drives transmembrane transport and the ATP synthase. Cytochrome c oxidase is the component of the respiratory chain that catalyzes the reduction of oxygen to water. Electrons originating from reduced cytochrome c in the intermembrane space (IMS) are transferred via the dinuclear copper A center (CU(A)) of subunit 2 and heme A of subunit 1 to the active site in subunit 1, a binuclear center (BNC) formed by heme A3 and copper B (CU(B)). The BNC reduces molecular oxygen to 2 water molecules using 4 electrons from cytochrome c in the IMS and 4 protons from the mitochondrial matrix. This is Cytochrome c oxidase subunit 3 (COX3) from Pyricularia grisea (Crabgrass-specific blast fungus).